Consider the following 86-residue polypeptide: Large ribosomal subunit protein bL27 (86 aa).

Belongs to the bacterial ribosomal protein bL27 family.

The sequence is that of Large ribosomal subunit protein bL27 from Flavobacterium psychrophilum (strain ATCC 49511 / DSM 21280 / CIP 103535 / JIP02/86).